A 309-amino-acid chain; its full sequence is Nucleoside kinase (309 aa).

Asp-16, Gly-42, and Asn-46 together coordinate substrate. Gln-108 serves as a coordination point for ATP. Substrate-binding positions include 110–112 (SYF) and Gln-166. ATP is bound by residues Asn-189 and 217–223 (KTYGKEG). Residue Asp-249 coordinates substrate. The active-site Proton acceptor is Asp-249.

Belongs to the carbohydrate kinase PfkB family. In terms of assembly, homodimer. Mg(2+) serves as cofactor.

In terms of biological role, catalyzes the phosphorylation of a wide range of nucleosides to yield nucleoside monophosphates, using ATP, ITP or GTP as phosphate donor. The protein is Nucleoside kinase of Methanothermobacter thermautotrophicus (strain ATCC 29096 / DSM 1053 / JCM 10044 / NBRC 100330 / Delta H) (Methanobacterium thermoautotrophicum).